The chain runs to 142 residues: Maximins y/H11 (142 aa).

The first 18 residues, 1–18 (MNFKYIVAVSFLITSGYA), serve as a signal peptide directing secretion. Residues 19–43 (ESVKNDEQSLSQRDVLEEESLREIR) constitute a propeptide that is removed on maturation. At Phe-68 the chain carries Phenylalanine amide. A propeptide spanning residues 72 to 121 (SAEDHEVMKRLEAVIRDLDSLDHPEEASERETRGFNQEEIANLFTKKEKR) is cleaved from the precursor. An Isoleucine amide modification is found at Ile-141.

It belongs to the bombinin family. In terms of tissue distribution, expressed by the skin glands.

Its subcellular location is the secreted. Maximin-y shows antimicrobial activity against bacteria and against the fungus C.albicans. It has little hemolytic activity. In terms of biological role, maximin-H11 shows antimicrobial activity against bacteria and against the fungus C.albicans. Shows strong hemolytic activity. The protein is Maximins y/H11 of Bombina maxima (Giant fire-bellied toad).